Consider the following 804-residue polypeptide: Leucine--tRNA ligase (804 aa).

The short motif at 40–51 (PYPSGAGLHVGH) is the 'HIGH' region element. The 'KMSKS' region signature appears at 576–580 (KMSKS). Lysine 579 is an ATP binding site.

It belongs to the class-I aminoacyl-tRNA synthetase family.

The protein resides in the cytoplasm. It catalyses the reaction tRNA(Leu) + L-leucine + ATP = L-leucyl-tRNA(Leu) + AMP + diphosphate. The chain is Leucine--tRNA ligase from Bacillus licheniformis (strain ATCC 14580 / DSM 13 / JCM 2505 / CCUG 7422 / NBRC 12200 / NCIMB 9375 / NCTC 10341 / NRRL NRS-1264 / Gibson 46).